The following is a 191-amino-acid chain: Protein phosphatase inhibitor 2 (191 aa).

A compositionally biased stretch (basic and acidic residues) spans 20 to 31 (ESNKPVRQKITE). Disordered regions lie at residues 20-52 (ESNK…RGRA) and 67-191 (RNVL…PELI). 2 positions are modified to phosphoserine: Ser-45 and Ser-47. The segment covering 93-109 (SDEEEEEADPMDQDEEG) has biased composition (acidic residues). The segment covering 114–136 (KNERFNAHRKAHYDEFRKVKELR) has biased composition (basic and acidic residues).

As to quaternary structure, interacts with protein phosphatase 1. Interacts with TOPP1, SRK2D/SNRK2.2, SRK2I/SNRK2.3, SRK2E/SNRK2.6, SRK2C/SNRK2.8 and PYL11. Phosphorylated in vivo. As to expression, expressed in roots, cotyledons, leaves, flowers and siliques.

It is found in the nucleus. The protein localises to the cytoplasm. Its function is as follows. Inhibitor of protein-phosphatase 1 (PP1). Binds to and inhibits PP1 activity. Acts as negative regulator of abscisic acid (ABA) signaling. Enhances the inhibition of SRK2E/SNRK2.6 by TOPP1. May promote the interaction between TOPP1 and the ABA receptor PYL11. This is Protein phosphatase inhibitor 2 from Arabidopsis thaliana (Mouse-ear cress).